Consider the following 160-residue polypeptide: Ribosomal RNA large subunit methyltransferase H (160 aa).

Residues leucine 76, glycine 108, and 127–132 (LGKMTW) contribute to the S-adenosyl-L-methionine site.

The protein belongs to the RNA methyltransferase RlmH family. In terms of assembly, homodimer.

It is found in the cytoplasm. It catalyses the reaction pseudouridine(1915) in 23S rRNA + S-adenosyl-L-methionine = N(3)-methylpseudouridine(1915) in 23S rRNA + S-adenosyl-L-homocysteine + H(+). In terms of biological role, specifically methylates the pseudouridine at position 1915 (m3Psi1915) in 23S rRNA. This is Ribosomal RNA large subunit methyltransferase H from Rhizobium johnstonii (strain DSM 114642 / LMG 32736 / 3841) (Rhizobium leguminosarum bv. viciae).